The sequence spans 75 residues: UPF0270 protein PP_1747 (75 aa).

The protein belongs to the UPF0270 family.

This Pseudomonas putida (strain ATCC 47054 / DSM 6125 / CFBP 8728 / NCIMB 11950 / KT2440) protein is UPF0270 protein PP_1747.